We begin with the raw amino-acid sequence, 134 residues long: Small ribosomal subunit protein uS9 (134 aa).

Positions 97 to 134 (ENRQDLKSCGFLTRDPRKKERKKYGHKKARKSFQFSKR) are disordered. A compositionally biased stretch (basic residues) spans 115–134 (KERKKYGHKKARKSFQFSKR).

This sequence belongs to the universal ribosomal protein uS9 family.

This Chlamydia pneumoniae (Chlamydophila pneumoniae) protein is Small ribosomal subunit protein uS9 (rpsI).